The following is a 92-amino-acid chain: Small ribosomal subunit protein uS19 (92 aa).

Belongs to the universal ribosomal protein uS19 family.

Functionally, protein S19 forms a complex with S13 that binds strongly to the 16S ribosomal RNA. This chain is Small ribosomal subunit protein uS19, found in Caulobacter vibrioides (strain ATCC 19089 / CIP 103742 / CB 15) (Caulobacter crescentus).